Consider the following 85-residue polypeptide: Conotoxin Lt28.3 (85 aa).

The N-terminal stretch at 1–21 (MPKLEMMLLVLLILPLCYIDA) is a signal peptide. A propeptide spanning residues 22–40 (VGPLPPWNMEDEIIEHWQK) is cleaved from the precursor.

This sequence belongs to the conotoxin D superfamily. Post-translationally, contains 5 disulfide bonds. As to expression, expressed by the venom duct.

It is found in the secreted. Functionally, probable neurotoxin. The polypeptide is Conotoxin Lt28.3 (Conus litteratus (Lettered cone)).